We begin with the raw amino-acid sequence, 493 residues long: uncharacterized protein (493 aa).

The interval 96-124 (TTVAKASPPPAKPASAPTEITWKGSPQFT) is disordered.

This is an uncharacterized protein from Caulobacter vibrioides (strain ATCC 19089 / CIP 103742 / CB 15) (Caulobacter crescentus).